Here is a 264-residue protein sequence, read N- to C-terminus: Small ribosomal subunit protein uS3 (264 aa).

The KH type-2 domain maps to 39–107 (VREYLKKKLK…PVHVNIEEIR (69 aa)). Positions 214 to 264 (PVETAAPREEERRPRRAPRGDRPDGARNGRPGGGRGRAPRKADAAPAPEGE) are disordered. Positions 219–240 (APREEERRPRRAPRGDRPDGAR) are enriched in basic and acidic residues.

It belongs to the universal ribosomal protein uS3 family. Part of the 30S ribosomal subunit. Forms a tight complex with proteins S10 and S14.

In terms of biological role, binds the lower part of the 30S subunit head. Binds mRNA in the 70S ribosome, positioning it for translation. This is Small ribosomal subunit protein uS3 from Bordetella avium (strain 197N).